The chain runs to 80 residues: Exodeoxyribonuclease 7 small subunit (80 aa).

The protein belongs to the XseB family. As to quaternary structure, heterooligomer composed of large and small subunits.

The protein resides in the cytoplasm. It catalyses the reaction Exonucleolytic cleavage in either 5'- to 3'- or 3'- to 5'-direction to yield nucleoside 5'-phosphates.. Functionally, bidirectionally degrades single-stranded DNA into large acid-insoluble oligonucleotides, which are then degraded further into small acid-soluble oligonucleotides. The sequence is that of Exodeoxyribonuclease 7 small subunit from Vibrio parahaemolyticus serotype O3:K6 (strain RIMD 2210633).